The chain runs to 426 residues: Enolase (426 aa).

A (2R)-2-phosphoglycerate-binding site is contributed by Gln163. The active-site Proton donor is Glu205. Asp242, Glu286, and Asp313 together coordinate Mg(2+). Residues Lys338, Arg367, Ser368, and Lys389 each contribute to the (2R)-2-phosphoglycerate site. The Proton acceptor role is filled by Lys338.

Belongs to the enolase family. Mg(2+) serves as cofactor.

It is found in the cytoplasm. It localises to the secreted. Its subcellular location is the cell surface. The enzyme catalyses (2R)-2-phosphoglycerate = phosphoenolpyruvate + H2O. It functions in the pathway carbohydrate degradation; glycolysis; pyruvate from D-glyceraldehyde 3-phosphate: step 4/5. Functionally, catalyzes the reversible conversion of 2-phosphoglycerate (2-PG) into phosphoenolpyruvate (PEP). It is essential for the degradation of carbohydrates via glycolysis. The protein is Enolase of Syntrophobacter fumaroxidans (strain DSM 10017 / MPOB).